Here is a 289-residue protein sequence, read N- to C-terminus: Ribonuclease H2 subunit A (289 aa).

In terms of domain architecture, RNase H type-2 spans 20 to 249 (PFVMGIDEAG…TETAMRGACF (230 aa)). A divalent metal cation is bound by residues aspartate 26, glutamate 27, and aspartate 134.

It belongs to the RNase HII family. Eukaryotic subfamily. Requires Mn(2+) as cofactor. It depends on Mg(2+) as a cofactor.

The catalysed reaction is Endonucleolytic cleavage to 5'-phosphomonoester.. Functionally, endonuclease that specifically degrades the RNA of RNA-DNA hybrids. Participates in DNA replication. The sequence is that of Ribonuclease H2 subunit A (rnaseh2A) from Dictyostelium discoideum (Social amoeba).